Here is a 603-residue protein sequence, read N- to C-terminus: Cdc42-interacting protein 4 (603 aa).

Residues M1–F117 are required for podosome formation and interaction with AKAP9 and microtubules. The tract at residues M1–F117 is required for translocation to the plasma membrane in response to insulin. One can recognise an F-BAR domain in the interval M1 to D264. Residues F67–V259 are a coiled coil. An interaction with CDC42 region spans residues R293–E539. Residues R293–N603 are interaction with PDE6G. The interval P295–P358 is disordered. 3 positions are modified to phosphoserine: S296, S298, and S299. Residues S316–P329 show a composition bias toward basic residues. A compositionally biased stretch (low complexity) spans S333–S346. 2 positions are modified to phosphoserine: S335 and S351. Residues T388–D481 are a coiled coil. Residues H393 to E470 form the REM-1 domain. The required for interaction with FASLG and localization to lysosomes stretch occupies residues A471–N603. The disordered stretch occupies residues S477–A541. S482 bears the Phosphoserine mark. The segment at A487–P543 is interaction with DNM2 and WASL. Over residues P497–Q510 the composition is skewed to low complexity. Positions E532–N603 are interaction with DNM1 and WASL. A required for podosome formation region spans residues P540–N603. The 62-residue stretch at S542–N603 folds into the SH3 domain. Residues Q546–N603 form an interaction with WAS region. The segment at V548 to N603 is interaction with ARHGAP17, DAAM1, DIAPH1 and DIAPH2.

This sequence belongs to the FNBP1 family. Homodimerizes, the dimers can polymerize end-to-end to form filamentous structures. Interacts with AKAP9, ARHGAP17, DAAM1, DIAPH1, DIAPH2, DNM1, FASLG/FASL, GAPVD1, LYN, microtubules, PDE6G, SRC and WAS/WASP. Interacts with the ligand binding domain of the thyroid receptor (TR) in the presence of thyroid hormone. May interact with CTNNB1 and HD/HTT. Interacts specifically with GTP-bound CDC42 and RHOQ. Interacts with DNM2 and WASL. Tyrosine phosphorylated. Also phosphorylated by PKA.

Its subcellular location is the cytoplasm. It localises to the cytoskeleton. It is found in the cell cortex. The protein localises to the lysosome. The protein resides in the golgi apparatus. Its subcellular location is the cell membrane. It localises to the cell projection. It is found in the phagocytic cup. Required to coordinate membrane tubulation with reorganization of the actin cytoskeleton during endocytosis. Binds to lipids such as phosphatidylinositol 4,5-bisphosphate and phosphatidylserine and promotes membrane invagination and the formation of tubules. Also promotes CDC42-induced actin polymerization by recruiting WASL/N-WASP which in turn activates the Arp2/3 complex. Actin polymerization may promote the fission of membrane tubules to form endocytic vesicles. Required for the formation of podosomes, actin-rich adhesion structures specific to monocyte-derived cells. May be required for the lysosomal retention of FASLG/FASL. Required for translocation of GLUT4 to the plasma membrane in response to insulin signaling. The protein is Cdc42-interacting protein 4 (Trip10) of Mus musculus (Mouse).